We begin with the raw amino-acid sequence, 119 residues long: Ribonuclease P protein component (119 aa).

Belongs to the RnpA family. As to quaternary structure, consists of a catalytic RNA component (M1 or rnpB) and a protein subunit.

The catalysed reaction is Endonucleolytic cleavage of RNA, removing 5'-extranucleotides from tRNA precursor.. Its function is as follows. RNaseP catalyzes the removal of the 5'-leader sequence from pre-tRNA to produce the mature 5'-terminus. It can also cleave other RNA substrates such as 4.5S RNA. The protein component plays an auxiliary but essential role in vivo by binding to the 5'-leader sequence and broadening the substrate specificity of the ribozyme. This Mycobacterium avium (strain 104) protein is Ribonuclease P protein component.